The primary structure comprises 428 residues: MKIVKVIGREILDSRGNPTIEVDVHLESGFIGRASVPSGASTGKNEALELRDGDKQRFLGKGVLKAVSNINKIIAPALLSRNVFDQRGIDKVMLSLDGTSTKSKLGANAILGVSLAVARAAAEYLQIPLYRYIGGVNTYILPIPMMNIINGGSHSDAPIAFQEFMIRPIGASSFREGLRMGVEVFHALKKVLHDRGLSTAVGDEGGFAPTLKGTEDALESIIQAIDNAGYKPVEDITIGLDCASSEFYKNGIYDYTKFEGTIGARRTSIQQVEYLSELVSKYPIDSIEDGMSENDWDGWKLLTSKIGNKVQLVGDDLFVTNVEFLKKGIEQGCANSILVKVNQIGSLTETLDSIEMAHRANYNSVVSHRSGETEDSTIADIAVATNSGQIKTGSLSRSDRMAKYNQLLRIEEELGDKAFYGYKALKMC.

Glutamine 162 provides a ligand contact to (2R)-2-phosphoglycerate. The active-site Proton donor is glutamate 204. Mg(2+)-binding residues include aspartate 241, glutamate 288, and aspartate 315. (2R)-2-phosphoglycerate is bound by residues lysine 340, arginine 369, serine 370, and lysine 391. Lysine 340 (proton acceptor) is an active-site residue.

It belongs to the enolase family. The cofactor is Mg(2+).

The protein resides in the cytoplasm. Its subcellular location is the secreted. It localises to the cell surface. The enzyme catalyses (2R)-2-phosphoglycerate = phosphoenolpyruvate + H2O. Its pathway is carbohydrate degradation; glycolysis; pyruvate from D-glyceraldehyde 3-phosphate: step 4/5. In terms of biological role, catalyzes the reversible conversion of 2-phosphoglycerate (2-PG) into phosphoenolpyruvate (PEP). It is essential for the degradation of carbohydrates via glycolysis. The sequence is that of Enolase from Azobacteroides pseudotrichonymphae genomovar. CFP2.